Here is a 914-residue protein sequence, read N- to C-terminus: Alanine--tRNA ligase (914 aa).

The Zn(2+) site is built by histidine 613, histidine 617, cysteine 717, and histidine 721.

This sequence belongs to the class-II aminoacyl-tRNA synthetase family. The cofactor is Zn(2+).

It localises to the cytoplasm. The catalysed reaction is tRNA(Ala) + L-alanine + ATP = L-alanyl-tRNA(Ala) + AMP + diphosphate. Its function is as follows. Catalyzes the attachment of alanine to tRNA(Ala) in a two-step reaction: alanine is first activated by ATP to form Ala-AMP and then transferred to the acceptor end of tRNA(Ala). Also edits incorrectly charged Ser-tRNA(Ala) and Gly-tRNA(Ala) via its editing domain. In Pyrococcus furiosus (strain ATCC 43587 / DSM 3638 / JCM 8422 / Vc1), this protein is Alanine--tRNA ligase.